Reading from the N-terminus, the 161-residue chain is Lipoprotein signal peptidase (161 aa).

3 helical membrane-spanning segments follow: residues 4 to 24 (LLVV…WSKY), 61 to 81 (KMIF…YLLI), and 87 to 107 (SIWY…NFID). Residues D116 and D132 contribute to the active site. Residues 127–147 (IFNVADSTLVVGVICIFIYLI) traverse the membrane as a helical segment.

Belongs to the peptidase A8 family.

The protein localises to the cell membrane. The enzyme catalyses Release of signal peptides from bacterial membrane prolipoproteins. Hydrolyzes -Xaa-Yaa-Zaa-|-(S,diacylglyceryl)Cys-, in which Xaa is hydrophobic (preferably Leu), and Yaa (Ala or Ser) and Zaa (Gly or Ala) have small, neutral side chains.. The protein operates within protein modification; lipoprotein biosynthesis (signal peptide cleavage). This protein specifically catalyzes the removal of signal peptides from prolipoproteins. In Enterococcus faecalis (strain ATCC 700802 / V583), this protein is Lipoprotein signal peptidase.